The primary structure comprises 207 residues: Cytochrome c biogenesis ATP-binding export protein CcmA 1 (207 aa).

One can recognise an ABC transporter domain in the interval 6 to 207; it reads LEALDLAGVR…KTSQTVRMGA (202 aa). 38-45 contributes to the ATP binding site; sequence GENGSGKT.

It belongs to the ABC transporter superfamily. CcmA exporter (TC 3.A.1.107) family. In terms of assembly, the complex is composed of two ATP-binding proteins (CcmA) and two transmembrane proteins (CcmB).

Its subcellular location is the cell inner membrane. It carries out the reaction heme b(in) + ATP + H2O = heme b(out) + ADP + phosphate + H(+). Functionally, part of the ABC transporter complex CcmAB involved in the biogenesis of c-type cytochromes; once thought to export heme, this seems not to be the case, but its exact role is uncertain. Responsible for energy coupling to the transport system. The protein is Cytochrome c biogenesis ATP-binding export protein CcmA 1 of Cupriavidus metallidurans (strain ATCC 43123 / DSM 2839 / NBRC 102507 / CH34) (Ralstonia metallidurans).